The following is a 73-amino-acid chain: UPF0435 protein BH2488 (73 aa).

The protein belongs to the UPF0435 family.

This chain is UPF0435 protein BH2488, found in Halalkalibacterium halodurans (strain ATCC BAA-125 / DSM 18197 / FERM 7344 / JCM 9153 / C-125) (Bacillus halodurans).